The following is a 2430-amino-acid chain: Transcription factor HIVEP2 (2430 aa).

The segment at 1–127 (MDTGDTALGQ…SLEGPPWLFP (127 aa)) is disordered. Polar residues-rich tracts occupy residues 11 to 22 (KATSRSGETDSV) and 96 to 110 (HSLSFPQHSLSQGMT). 2 C2H2-type zinc fingers span residues 189 to 211 (YICPYCSRACAKPSVLKKHIRSH) and 217 to 239 (YPCIPCGFSFKTKSNLYKHRKSH). 3 disordered regions span residues 271 to 302 (IHSDGEQSTDTDEESSLFAEASDKVSPGPPVP), 374 to 418 (SEKK…NTNA), and 744 to 995 (AHGH…SGKH). Polar residues predominate over residues 381–418 (SEPSLNLLSPHSKGSTDSGYFSRSESAEQQISPPNTNA). 2 stretches are compositionally biased toward basic and acidic residues: residues 744–753 (AHGHSDRLDP) and 775–784 (DPDKMTDLGK). Residues 792–804 (SVIQHTNSLSRPN) are compositionally biased toward polar residues. The residue at position 811 (S811) is a Phosphoserine. Polar residues predominate over residues 853–863 (SKPTPSQQVPQ). The segment covering 884 to 908 (RVTEEPDKPEKEKEAPTKEPEKPVE) has biased composition (basic and acidic residues). Positions 929–935 (PKKKRLR) match the Nuclear localization signal motif. S942, S947, S1040, S1431, and S1435 each carry phosphoserine. The span at 944-974 (GESSFESTGTGLSRSPSQESNLSHSSSFSMS) shows a compositional bias: low complexity. Residues 1472 to 1584 (KKGLSRPQKP…GGQQEEEGKA (113 aa)) are disordered. Composition is skewed to low complexity over residues 1499–1520 (SRSSSFSSLSPSSSQDHPSASG) and 1560–1569 (SDMSMSPQSS). 2 C2H2-type zinc fingers span residues 1783–1805 (YICEECGIRCKKPSMLKKHIRTH) and 1811–1835 (YVCKLCNFAFKTKGNLTKHMKSKAH). Disordered regions lie at residues 1848 to 1931 (SVDD…SSLP) and 1986 to 2117 (FQSK…SPRR). The span at 1850–1860 (DDTETEEAENM) shows a compositional bias: acidic residues. Residues 1861-1871 (EELHKTSEKHS) show a composition bias toward basic and acidic residues. The segment covering 1883-1909 (DAEESDGEDGDDNDDDDEDDDDFDDQG) has biased composition (acidic residues). Residues 1991-2001 (TDSEPDKDRLD) are compositionally biased toward basic and acidic residues. A compositionally biased stretch (low complexity) spans 2013 to 2037 (SSEPSSSPRDFSPSSYRSSPGYDSS). 10 repeat units span residues 2037–2040 (SPCR), 2043–2046 (SPKR), 2055–2058 (SPRR), 2067–2070 (SPMR), 2073–2076 (SPRK), 2090–2093 (SPRR), 2096–2099 (SPRR), 2102–2105 (SPGK), 2114–2117 (SPRR), and 2129–2132 (SPRR). The segment at 2037–2132 (SPCRDNSPKR…TTIRAPSPRR (96 aa)) is 10 X 4 AA tandem repeats of S-P-[RGMKC]-[RK]. A compositionally biased stretch (basic and acidic residues) spans 2062 to 2085 (PRRDLSPMRHLSPRKEAALRREMS). S2102 carries the post-translational modification Phosphoserine. Positions 2107-2116 (ITARRDLSPR) are enriched in basic and acidic residues. 3 disordered regions span residues 2226 to 2252 (PALSGLHPPPTLPLPTEGSEEKKGAPG), 2268 to 2309 (KQAP…QEEN), and 2352 to 2430 (SIRH…NQLH). Low complexity predominate over residues 2271–2289 (PQVLQSSGLPSSPSSPRLL). A phosphoserine mark is found at S2281 and S2285. The span at 2291-2301 (KQSTSEDSLNS) shows a compositional bias: polar residues. The span at 2371–2380 (PDLHDGEKDT) shows a compositional bias: basic and acidic residues. A compositionally biased stretch (polar residues) spans 2406–2417 (FQSSKELSLSTE). Phosphoserine occurs at positions 2413 and 2415.

As to quaternary structure, interacts with TCF4. In terms of tissue distribution, expressed in heart, lung, skeletal muscle and liver. In the brain expressed in cerebral cortex, hippocampus, corpora amygdala and cerebellar cortex.

The protein resides in the nucleus. Its function is as follows. Specifically binds to the DNA sequence 5'-GGGACTTTCC-3' which is found in the enhancer elements of numerous viral promoters such as those of SV40, CMV, or HIV1. In addition, related sequences are found in the enhancer elements of a number of cellular promoters, including those of the class I MHC, interleukin-2 receptor, somatostatin receptor II, and interferon-beta genes. It may act in T-cell activation. The sequence is that of Transcription factor HIVEP2 (Hivep2) from Mus musculus (Mouse).